Reading from the N-terminus, the 108-residue chain is MAEEFVQQRLANNKVTIFVKYTCPFCRNALDILNKFSFKRGAYEIVDIKEFKPENELRDYFEQITGGKTVPRIFFGKTSIGGYSDLLEIDNMDALGDILSSIGVLRTC.

A Glutaredoxin domain is found at 3 to 106 (EEFVQQRLAN…DILSSIGVLR (104 aa)). A disulfide bond links Cys-23 and Cys-26.

The protein belongs to the glutaredoxin family.

It localises to the virion. Functionally, has thioltransferase and dehydroascorbate reductase activities. The protein is Glutaredoxin-1 (OPG075) of Ectromelia virus (strain Moscow) (ECTV).